The chain runs to 473 residues: MSKGQVIQVMGPVVDVKFEGGNLPEIYNALVIEYKSDAEEAPTSQLTLEVAIQLGDDVVRTIAMASTDGVQRGMEVIDTGSPITVPVGTVTLGRVFNVLGNTIDLDEPLPSDIKRNKIHREAPTFDQLATTTEILETGIKVVDLLAPYLKGGKIGLFGGAGVGKTVLIQELIHNIAQEHGGISVFAGVGERTREGNDLYFEMKDSGVIEKTAMVFGQMNEPPGARMRVALTGLTIAEYFRDEEHQDVLLFIDNIFRFTQAGSEVSALLGRMPSAVGYQPTLATEMGQLQERITSTNVGSVTSIQAIYVPADDYTDPAPATTFAHLDATTNLERKLTEQGIYPAVDPLASTSRALSPDIVGEEHYAVATEVQRLLQRYKELQDIIAILGMDELSDEDKQSVSRARRVQFFLSQNFHVAEQFTGQKGSYVPVKETVKGFKDLLAGKYDHIPEDAFRSVGRIEEVLEKAKDMGVEV.

ATP is bound at residue G158–T165.

It belongs to the ATPase alpha/beta chains family. F-type ATPases have 2 components, CF(1) - the catalytic core - and CF(0) - the membrane proton channel. CF(1) has five subunits: alpha(3), beta(3), gamma(1), delta(1), epsilon(1). CF(0) has three main subunits: a(1), b(2) and c(9-12). The alpha and beta chains form an alternating ring which encloses part of the gamma chain. CF(1) is attached to CF(0) by a central stalk formed by the gamma and epsilon chains, while a peripheral stalk is formed by the delta and b chains.

The protein localises to the cell membrane. The enzyme catalyses ATP + H2O + 4 H(+)(in) = ADP + phosphate + 5 H(+)(out). In terms of biological role, produces ATP from ADP in the presence of a proton gradient across the membrane. The catalytic sites are hosted primarily by the beta subunits. The polypeptide is ATP synthase subunit beta 2 (Listeria welshimeri serovar 6b (strain ATCC 35897 / DSM 20650 / CCUG 15529 / CIP 8149 / NCTC 11857 / SLCC 5334 / V8)).